The sequence spans 503 residues: Glycosyltransferase family 92 protein ZK381.2 (503 aa).

The helical transmembrane segment at 7–27 (YKPCLLIILIFNSVILLFILI) threads the bilayer. Positions 156-441 (KPVIICISPQ…FKCYFDSFYK (286 aa)) constitute a GT92 domain.

It belongs to the glycosyltransferase 92 family.

Its subcellular location is the membrane. The chain is Glycosyltransferase family 92 protein ZK381.2 from Caenorhabditis elegans.